Consider the following 233-residue polypeptide: Orotidine 5'-phosphate decarboxylase (233 aa).

Residues aspartate 11, lysine 34, 61–70, threonine 117, arginine 179, glutamine 188, glycine 208, and arginine 209 each bind substrate; that span reads DLKLHDIPNT. Lysine 63 functions as the Proton donor in the catalytic mechanism.

The protein belongs to the OMP decarboxylase family. Type 1 subfamily. In terms of assembly, homodimer.

It catalyses the reaction orotidine 5'-phosphate + H(+) = UMP + CO2. It participates in pyrimidine metabolism; UMP biosynthesis via de novo pathway; UMP from orotate: step 2/2. In terms of biological role, catalyzes the decarboxylation of orotidine 5'-monophosphate (OMP) to uridine 5'-monophosphate (UMP). This Streptococcus pneumoniae serotype 4 (strain ATCC BAA-334 / TIGR4) protein is Orotidine 5'-phosphate decarboxylase.